Consider the following 603-residue polypeptide: uncharacterized protein (603 aa).

In terms of domain architecture, PE spans 1 to 93; sequence MSFVIAAPET…AGAYASAEAA (93 aa). Residues 309–333 are disordered; sequence GIFTGNGGTGGTGGTGTGNQLVGGE.

It belongs to the mycobacterial PE family. PGRS subfamily.

This is an uncharacterized protein from Mycobacterium tuberculosis (strain CDC 1551 / Oshkosh).